The chain runs to 209 residues: Small ribosomal subunit protein uS4 (209 aa).

The region spanning 99 to 159 (SRLDSVCYRM…EKSKAQLRIK (61 aa)) is the S4 RNA-binding domain.

The protein belongs to the universal ribosomal protein uS4 family. As to quaternary structure, part of the 30S ribosomal subunit. Contacts protein S5. The interaction surface between S4 and S5 is involved in control of translational fidelity.

Functionally, one of the primary rRNA binding proteins, it binds directly to 16S rRNA where it nucleates assembly of the body of the 30S subunit. Its function is as follows. With S5 and S12 plays an important role in translational accuracy. The sequence is that of Small ribosomal subunit protein uS4 from Thiobacillus denitrificans (strain ATCC 25259 / T1).